We begin with the raw amino-acid sequence, 327 residues long: Tartrate-resistant acid phosphatase type 5 (327 aa).

A signal peptide spans 1-22 (MDSWVVLLGLQIIWLPLLTHGT). The Fe cation site is built by aspartate 35, aspartate 73, tyrosine 76, and asparagine 112. N-linked (GlcNAc...) asparagine glycans are attached at residues asparagine 118 and asparagine 149. Cysteines 163 and 221 form a disulfide. Residues histidine 207, histidine 242, and histidine 244 each contribute to the Fe cation site.

As to quaternary structure, exists either as monomer or, after proteolytic processing, as a dimer of two chains linked by disulfide bond(s). Fe cation is required as a cofactor. As to expression, characteristic constituent of osteoclasts.

Its subcellular location is the lysosome. It catalyses the reaction a phosphate monoester + H2O = an alcohol + phosphate. Functionally, may play a role in the process of bone resorption. The osteoclastic trap acts on nucleotide tri- and diphosphates with higher affinity, compared with other substrates. This is Tartrate-resistant acid phosphatase type 5 (Acp5) from Mus musculus (Mouse).